Here is a 117-residue protein sequence, read N- to C-terminus: Large ribosomal subunit protein bL20 (117 aa).

This sequence belongs to the bacterial ribosomal protein bL20 family.

Its function is as follows. Binds directly to 23S ribosomal RNA and is necessary for the in vitro assembly process of the 50S ribosomal subunit. It is not involved in the protein synthesizing functions of that subunit. The protein is Large ribosomal subunit protein bL20 of Lawsonia intracellularis (strain PHE/MN1-00).